The sequence spans 155 residues: MRSIFLLHFDYKTCEEEDFEDWNLADGKCLNGAKYMYKRRKQDARCLVKRTFKDMILHEIPCDSCTESDYECSSEFVRDAKGDCIPDYDQIALSDICDKANGETVSLEPLQLIKGDKCKKPMEIEAMNIPCEKILRESSNGKKIATIENKFDFEI.

This is an uncharacterized protein from Saccharomyces cerevisiae (strain ATCC 204508 / S288c) (Baker's yeast).